A 150-amino-acid chain; its full sequence is MMNKGGGSGGGSGPTAAAAAAALQKQKALLQRVDTDITSVVDNFNQIVNVARVSDPPMKNSQEAYMMEMRASRLVQAADSLLKLVSELKQTAIFSGFASLNDHVEQRIAEFDQEAEKTNRLLARIADDASASLKELESHYYSSAQRSTLD.

Positions 99-127 form a coiled coil; the sequence is SLNDHVEQRIAEFDQEAEKTNRLLARIAD.

The protein belongs to the Mediator complex subunit 22 family. As to quaternary structure, component of the Mediator complex.

The protein localises to the nucleus. In terms of biological role, component of the Mediator complex, a coactivator involved in the regulated transcription of nearly all RNA polymerase II-dependent genes. Mediator functions as a bridge to convey information from gene-specific regulatory proteins to the basal RNA polymerase II transcription machinery. The Mediator complex, having a compact conformation in its free form, is recruited to promoters by direct interactions with regulatory proteins and serves for the assembly of a functional preinitiation complex with RNA polymerase II and the general transcription factors. The polypeptide is Mediator of RNA polymerase II transcription subunit 22a (MED22A) (Arabidopsis thaliana (Mouse-ear cress)).